A 425-amino-acid polypeptide reads, in one-letter code: Enolase (425 aa).

Residue glutamine 162 participates in (2R)-2-phosphoglycerate binding. Residue glutamate 204 is the Proton donor of the active site. Mg(2+) contacts are provided by aspartate 241, glutamate 282, and aspartate 309. Residues lysine 334, arginine 363, serine 364, and lysine 385 each contribute to the (2R)-2-phosphoglycerate site. The Proton acceptor role is filled by lysine 334.

The protein belongs to the enolase family. The cofactor is Mg(2+).

It localises to the cytoplasm. The protein localises to the secreted. It is found in the cell surface. The catalysed reaction is (2R)-2-phosphoglycerate = phosphoenolpyruvate + H2O. The protein operates within carbohydrate degradation; glycolysis; pyruvate from D-glyceraldehyde 3-phosphate: step 4/5. Functionally, catalyzes the reversible conversion of 2-phosphoglycerate (2-PG) into phosphoenolpyruvate (PEP). It is essential for the degradation of carbohydrates via glycolysis. This chain is Enolase, found in Corynebacterium efficiens (strain DSM 44549 / YS-314 / AJ 12310 / JCM 11189 / NBRC 100395).